A 548-amino-acid chain; its full sequence is Membrane protein insertase YidC (548 aa).

A helical transmembrane segment spans residues 6–26; sequence NLLVIALLFVSFMIWQAWEQD. The tract at residues 28–54 is disordered; sequence NPQPQTQQTTQTTTTAAGSAADQGVPA. Positions 29–42 are enriched in low complexity; sequence PQPQTQQTTQTTTT. Helical transmembrane passes span 350–370, 424–444, 458–478, and 499–519; these read FLGN…GIMY, FPLI…MGSI, LSAQ…MFFI, and PVIF…YYIV.

This sequence belongs to the OXA1/ALB3/YidC family. Type 1 subfamily. In terms of assembly, interacts with the Sec translocase complex via SecD. Specifically interacts with transmembrane segments of nascent integral membrane proteins during membrane integration.

The protein localises to the cell inner membrane. Functionally, required for the insertion and/or proper folding and/or complex formation of integral membrane proteins into the membrane. Involved in integration of membrane proteins that insert both dependently and independently of the Sec translocase complex, as well as at least some lipoproteins. Aids folding of multispanning membrane proteins. The polypeptide is Membrane protein insertase YidC (Citrobacter koseri (strain ATCC BAA-895 / CDC 4225-83 / SGSC4696)).